The following is a 332-amino-acid chain: L-lactate dehydrogenase A chain (332 aa).

Residues 29-57 and Arg99 each bind NAD(+); that span reads GMVG…MEDK. Substrate-binding residues include Arg106, Asn138, and Arg169. Asn138 provides a ligand contact to NAD(+). His193 serves as the catalytic Proton acceptor. Position 248 (Thr248) interacts with substrate.

It belongs to the LDH/MDH superfamily. LDH family. Homotetramer.

The protein localises to the cytoplasm. The enzyme catalyses (S)-lactate + NAD(+) = pyruvate + NADH + H(+). The protein operates within fermentation; pyruvate fermentation to lactate; (S)-lactate from pyruvate: step 1/1. Functionally, interconverts simultaneously and stereospecifically pyruvate and lactate with concomitant interconversion of NADH and NAD(+). The chain is L-lactate dehydrogenase A chain (ldha) from Sphyraena lucasana (Lucas barracuda).